Reading from the N-terminus, the 169-residue chain is Photosystem I assembly protein Ycf3 (169 aa).

TPR repeat units follow at residues 36-69 (AFTY…EIDP), 73-106 (SYIL…NPFL), and 121-154 (GEQA…TPGN).

Belongs to the Ycf3 family.

It is found in the plastid. Its subcellular location is the chloroplast thylakoid membrane. Essential for the assembly of the photosystem I (PSI) complex. May act as a chaperone-like factor to guide the assembly of the PSI subunits. This is Photosystem I assembly protein Ycf3 from Cucumis sativus (Cucumber).